Reading from the N-terminus, the 301-residue chain is CRISPR-associated endonuclease Cas1 (301 aa).

Glu-133, His-200, and Asp-213 together coordinate Mn(2+).

It belongs to the CRISPR-associated endonuclease Cas1 family. In terms of assembly, homodimer, forms a heterotetramer with a Cas2 homodimer. Requires Mg(2+) as cofactor. Mn(2+) serves as cofactor.

CRISPR (clustered regularly interspaced short palindromic repeat), is an adaptive immune system that provides protection against mobile genetic elements (viruses, transposable elements and conjugative plasmids). CRISPR clusters contain spacers, sequences complementary to antecedent mobile elements, and target invading nucleic acids. CRISPR clusters are transcribed and processed into CRISPR RNA (crRNA). Acts as a dsDNA endonuclease. Involved in the integration of spacer DNA into the CRISPR cassette. The chain is CRISPR-associated endonuclease Cas1 from Clostridium sp. (strain SY8519).